The chain runs to 490 residues: Proline--tRNA ligase (490 aa).

This sequence belongs to the class-II aminoacyl-tRNA synthetase family. ProS type 3 subfamily. In terms of assembly, homodimer.

The protein localises to the cytoplasm. It catalyses the reaction tRNA(Pro) + L-proline + ATP = L-prolyl-tRNA(Pro) + AMP + diphosphate. In terms of biological role, catalyzes the attachment of proline to tRNA(Pro) in a two-step reaction: proline is first activated by ATP to form Pro-AMP and then transferred to the acceptor end of tRNA(Pro). In Salinibacter ruber (strain DSM 13855 / M31), this protein is Proline--tRNA ligase.